A 321-amino-acid chain; its full sequence is Annexin D3 (321 aa).

An N-acetylalanine modification is found at Ala2. 4 Annexin repeats span residues Pro11–Tyr82, Asp83–Ser159, Glu171–Phe243, and Thr247–Gly318. Positions 26, 28, and 68 each coordinate Ca(2+). Thr117 is modified (phosphothreonine). Residues Ile260 and Gly264 each coordinate Ca(2+). Tyr289 bears the Phosphotyrosine mark. Asp304 lines the Ca(2+) pocket.

The protein belongs to the annexin (TC 1.A.31.1) family. Expressed mainly in roots and flowers. Lower in stems and leaves.

In Arabidopsis thaliana (Mouse-ear cress), this protein is Annexin D3 (ANN3).